The sequence spans 680 residues: Forkhead box protein P4 (680 aa).

A compositionally biased stretch (polar residues) spans 1-17; the sequence is MMVESASETIRSAPSGQ. The tract at residues 1 to 56 is disordered; that stretch reads MMVESASETIRSAPSGQNGVGSLSGQADGSSGGATGTTASGTGREVTTGADSNGEM. Phosphoserine occurs at positions 52 and 86. Glycyl lysine isopeptide (Lys-Gly) (interchain with G-Cter in SUMO2) cross-links involve residues Lys175 and Lys246. The tract at residues 262–306 is disordered; that stretch reads FAAPPKVSPPLSHHTLPNGQPTVLTSRRDSSSHEETPGSHPLYGH. A compositionally biased stretch (polar residues) spans 276 to 286; sequence TLPNGQPTVLT. The span at 287 to 298 shows a compositional bias: basic and acidic residues; the sequence is SRRDSSSHEETP. The segment at 307–332 adopts a C2H2-type zinc-finger fold; it reads GECKWPGCETLCEDLGQFIKHLNTEH. The interval 349 to 370 is leucine-zipper; it reads VQQLEIQLAKESERLQAMMAHL. Lys378 is covalently cross-linked (Glycyl lysine isopeptide (Lys-Gly) (interchain with G-Cter in SUMO2)). Positions 407–445 are disordered; the sequence is GLVHPPTSAAAPVTPLRPPGLGSASLHGGGPARRRSSDK. The segment at residues 467-559 is a DNA-binding region (fork-head); it reads RPPFTYASLI…KMTGSPTLVK (93 aa). Ser554 carries the phosphoserine modification. The disordered stretch occupies residues 602–680; that stretch reads PLSHDDVGAP…EEELPGEELS (79 aa). Residues 617–635 show a composition bias toward polar residues; sequence SNGSSSPPRLSPPQYSHQV. Acidic residues predominate over residues 668–680; that stretch reads RDLEEELPGEELS.

Forms homodimers and heterodimers with FOXP1 and FOXP2. Dimerization is required for DNA-binding.

It is found in the nucleus. Transcriptional repressor that represses lung-specific expression. This chain is Forkhead box protein P4 (FOXP4), found in Homo sapiens (Human).